The following is a 612-amino-acid chain: MSRIGKHPAIALLDSGITFKEVRQIHAKLYVDGTLKDDHLVGHFVKAVALSDHKYLDYANQILDRSEKPTLFALNSMIRAHCKSPVPEKSFDFYRRILSSGNDLKPDNYTVNFLVQACTGLRMRETGLQVHGMTIRRGFDNDPHVQTGLISLYAELGCLDSCHKVFNSIPCPDFVCRTAMVTACARCGDVVFARKLFEGMPERDPIAWNAMISGYAQVGESREALNVFHLMQLEGVKVNGVAMISVLSACTQLGALDQGRWAHSYIERNKIKITVRLATTLVDLYAKCGDMEKAMEVFWGMEEKNVYTWSSALNGLAMNGFGEKCLELFSLMKQDGVTPNAVTFVSVLRGCSVVGFVDEGQRHFDSMRNEFGIEPQLEHYGCLVDLYARAGRLEDAVSIIQQMPMKPHAAVWSSLLHASRMYKNLELGVLASKKMLELETANHGAYVLLSNIYADSNDWDNVSHVRQSMKSKGVRKQPGCSVMEVNGEVHEFFVGDKSHPKYTQIDAVWKDISRRLRLAGYKADTTPVMFDIDEEEKEDALCLHSEKAAIAFGIMSLKEDVPIRIVKNLRVCGDCHQVSMMISKIFNREIIVRDRNRFHHFKDGHCSCNGFW.

10 PPR repeats span residues 70–104, 107–141, 142–172, 173–203, 204–238, 239–273, 274–304, 305–339, 340–375, and 376–410; these read TLFALNSMIRAHCKSPVPEKSFDFYRRILSSGNDL, DNYTVNFLVQACTGLRMRETGLQVHGMTIRRGFDN, DPHVQTGLISLYAELGCLDSCHKVFNSIPCP, DFVCRTAMVTACARCGDVVFARKLFEGMPER, DPIAWNAMISGYAQVGESREALNVFHLMQLEGVKV, NGVAMISVLSACTQLGALDQGRWAHSYIERNKIKI, TVRLATTLVDLYAKCGDMEKAMEVFWGMEEK, NVYTWSSALNGLAMNGFGEKCLELFSLMKQDGVTP, NAVTFVSVLRGCSVVGFVDEGQRHFDSMRNEFGIEP, and QLEHYGCLVDLYARAGRLEDAVSIIQQMPMKPHAA. The type E motif stretch occupies residues 411 to 486; that stretch reads VWSSLLHASR…QPGCSVMEVN (76 aa). Residues 487–517 are type E(+) motif; that stretch reads GEVHEFFVGDKSHPKYTQIDAVWKDISRRLR. The type DYW motif stretch occupies residues 518 to 612; the sequence is LAGYKADTTP…DGHCSCNGFW (95 aa).

The protein belongs to the PPR family. PCMP-H subfamily.

This is Putative pentatricopeptide repeat-containing protein At5g40405 (PCMP-H14) from Arabidopsis thaliana (Mouse-ear cress).